The primary structure comprises 297 residues: RNA polymerase sigma-F factor (297 aa).

Residues 1 to 46 (MTVPASTAPQVPPQQDPQVPHPQEPREEPHEEPPSPPAAPRPQSRG) form a disordered region. Residues 10–22 (QVPPQQDPQVPHP) are compositionally biased toward pro residues. Residues 23–33 (QEPREEPHEEP) are compositionally biased toward basic and acidic residues. The short motif at 101–114 (DVVQVGTIGLINAI) is the Polymerase core binding element. Positions 264 to 283 (QSQISAELGVSQMHVSRLLA) form a DNA-binding region, H-T-H motif.

This sequence belongs to the sigma-70 factor family. SigB subfamily.

Functionally, sigma factors are initiation factors that promote the attachment of RNA polymerase to specific initiation sites and are then released. This sigma factor is required for normal spore maturation. The polypeptide is RNA polymerase sigma-F factor (sigF) (Kitasatospora aureofaciens (Streptomyces aureofaciens)).